We begin with the raw amino-acid sequence, 549 residues long: MTKFVFVTGGVVSSIGKGIVAASLGRLLKSRNYSVSILKLDPYINVDPGTMSPFQHGEVFVTDDGAETDLDLGHYERFTDTAMSRLNSVTTGSIYQAVLNKERRGDYMGGTVQVIPHITNEIKDRILRVAKDTNPDVVIIEIGGTVGDIESLPFLEAIRQFRTEVGRQNVLYMHVTLIPWIPSAGEMKTKPTQHSVKELRSIGIQPDILVCRCDRPLYPGIKDKMSQFCDVPVKSVITCQDARSIYEVPLILEREGLAAQVLSLLNLEQRTPDLSEWQSLVEQLYRPKPPVEIAIVGKYVRLTDAYLSVMEALRHAAIAVGCELNLRWINSEDLENNNPEAYLGGVTGVVVPGGFGIRGVDGKIAAIRYAREHQIPFLGLCLGMQCCVIEWARSIAKLTDANSAEFDPQTSNPVINLLPEQQDVEVLGGTMRLGLYPCRLLSNSLAYQLYQETVIYERHRHRYEFNNAYRNLFLDTGFVVSGSSPDGRLVEIIELPEHPFFIATQFHPEFRSRPNVPHPLFKGFVQAARTHSSDRSNGHTPSETPSLSV.

The amidoligase domain stretch occupies residues 1–267 (MTKFVFVTGG…AAQVLSLLNL (267 aa)). Ser13 contacts CTP. Ser13 is a UTP binding site. Residues 14-19 (SIGKGI) and Asp71 each bind ATP. Asp71 and Glu141 together coordinate Mg(2+). Residues 148-150 (DIE), 188-193 (KTKPTQ), and Lys224 each bind CTP. Residues 188 to 193 (KTKPTQ) and Lys224 each bind UTP. The Glutamine amidotransferase type-1 domain maps to 292-534 (EIAIVGKYVR…VQAARTHSSD (243 aa)). Residue Gly354 participates in L-glutamine binding. The Nucleophile; for glutamine hydrolysis role is filled by Cys381. L-glutamine-binding positions include 382-385 (LGMQ), Glu405, and Arg462. Catalysis depends on residues His507 and Glu509.

Belongs to the CTP synthase family. As to quaternary structure, homotetramer.

It catalyses the reaction UTP + L-glutamine + ATP + H2O = CTP + L-glutamate + ADP + phosphate + 2 H(+). The enzyme catalyses L-glutamine + H2O = L-glutamate + NH4(+). The catalysed reaction is UTP + NH4(+) + ATP = CTP + ADP + phosphate + 2 H(+). It participates in pyrimidine metabolism; CTP biosynthesis via de novo pathway; CTP from UDP: step 2/2. Allosterically activated by GTP, when glutamine is the substrate; GTP has no effect on the reaction when ammonia is the substrate. The allosteric effector GTP functions by stabilizing the protein conformation that binds the tetrahedral intermediate(s) formed during glutamine hydrolysis. Inhibited by the product CTP, via allosteric rather than competitive inhibition. Functionally, catalyzes the ATP-dependent amination of UTP to CTP with either L-glutamine or ammonia as the source of nitrogen. Regulates intracellular CTP levels through interactions with the four ribonucleotide triphosphates. The protein is CTP synthase of Cyanothece sp. (strain PCC 7425 / ATCC 29141).